Here is a 146-residue protein sequence, read N- to C-terminus: Transcriptional regulator MraZ (146 aa).

2 consecutive SpoVT-AbrB domains span residues 5 to 50 (SSFH…TFNE) and 77 to 120 (ACEC…SREQ).

Belongs to the MraZ family. Forms oligomers.

It localises to the cytoplasm. The protein resides in the nucleoid. The sequence is that of Transcriptional regulator MraZ from Desulforapulum autotrophicum (strain ATCC 43914 / DSM 3382 / VKM B-1955 / HRM2) (Desulfobacterium autotrophicum).